We begin with the raw amino-acid sequence, 142 residues long: Universal stress protein G (142 aa).

This sequence belongs to the universal stress protein A family.

This Escherichia coli O157:H7 protein is Universal stress protein G (uspG).